Reading from the N-terminus, the 155-residue chain is Cell division protein SepF (155 aa).

A compositionally biased stretch (acidic residues) spans 16–35; that stretch reads TEDEEEDVETVEESEDVEEE. The segment at 16 to 44 is disordered; that stretch reads TEDEEEDVETVEESEDVEEEESKKPQFIQ.

It belongs to the SepF family. In terms of assembly, homodimer. Interacts with FtsZ.

The protein localises to the cytoplasm. Functionally, cell division protein that is part of the divisome complex and is recruited early to the Z-ring. Probably stimulates Z-ring formation, perhaps through the cross-linking of FtsZ protofilaments. Its function overlaps with FtsA. This is Cell division protein SepF from Acetivibrio thermocellus (strain ATCC 27405 / DSM 1237 / JCM 9322 / NBRC 103400 / NCIMB 10682 / NRRL B-4536 / VPI 7372) (Clostridium thermocellum).